Consider the following 199-residue polypeptide: ATP-dependent Clp protease proteolytic subunit (199 aa).

Serine 102 serves as the catalytic Nucleophile. Histidine 127 is an active-site residue.

It belongs to the peptidase S14 family. As to quaternary structure, component of the chloroplastic Clp protease core complex.

Its subcellular location is the plastid. It localises to the chloroplast stroma. The catalysed reaction is Hydrolysis of proteins to small peptides in the presence of ATP and magnesium. alpha-casein is the usual test substrate. In the absence of ATP, only oligopeptides shorter than five residues are hydrolyzed (such as succinyl-Leu-Tyr-|-NHMec, and Leu-Tyr-Leu-|-Tyr-Trp, in which cleavage of the -Tyr-|-Leu- and -Tyr-|-Trp bonds also occurs).. Functionally, cleaves peptides in various proteins in a process that requires ATP hydrolysis. Has a chymotrypsin-like activity. Plays a major role in the degradation of misfolded proteins. This chain is ATP-dependent Clp protease proteolytic subunit, found in Physcomitrium patens (Spreading-leaved earth moss).